The following is a 143-amino-acid chain: UPF0047 protein MTH_771 (143 aa).

The protein belongs to the UPF0047 family.

The protein is UPF0047 protein MTH_771 of Methanothermobacter thermautotrophicus (strain ATCC 29096 / DSM 1053 / JCM 10044 / NBRC 100330 / Delta H) (Methanobacterium thermoautotrophicum).